We begin with the raw amino-acid sequence, 263 residues long: Small ribosomal subunit protein eS1 (263 aa).

Over residues 236–254 the composition is skewed to basic and acidic residues; that stretch reads GDGKGGSDEPGARVDRPEG. Residues 236–263 form a disordered region; it reads GDGKGGSDEPGARVDRPEGYEPPVQETV.

This sequence belongs to the eukaryotic ribosomal protein eS1 family. In terms of assembly, component of the small ribosomal subunit. Mature ribosomes consist of a small (40S) and a large (60S) subunit. The 40S subunit contains about 33 different proteins and 1 molecule of RNA (18S). The 60S subunit contains about 49 different proteins and 3 molecules of RNA (28S, 5.8S and 5S).

It localises to the cytoplasm. This is Small ribosomal subunit protein eS1 from Periplaneta americana (American cockroach).